A 277-amino-acid chain; its full sequence is Small ribosomal subunit protein uS3 (277 aa).

Positions 43 to 111 (IRQLMSTGME…QVQLNILEVK (69 aa)) constitute a KH type-2 domain. The span at 218–228 (QQAAAAPSRGR) shows a compositional bias: low complexity. Positions 218–277 (QQAAAAPSRGRGASDRPGRPGGADRGDRRRRTDRPAAEAAPAAEAPAVEAAAPAVEGGQA) are disordered. The span at 229 to 244 (GASDRPGRPGGADRGD) shows a compositional bias: basic and acidic residues. A compositionally biased stretch (low complexity) spans 254-277 (AEAAPAAEAPAVEAAAPAVEGGQA).

Belongs to the universal ribosomal protein uS3 family. Part of the 30S ribosomal subunit. Forms a tight complex with proteins S10 and S14.

Binds the lower part of the 30S subunit head. Binds mRNA in the 70S ribosome, positioning it for translation. This chain is Small ribosomal subunit protein uS3, found in Arthrobacter sp. (strain FB24).